Consider the following 321-residue polypeptide: Nacrein-like protein (321 aa).

In terms of domain architecture, Alpha-carbonic anhydrase spans 1 to 319 (RGPKNWCKVH…NKNVIVYRNH (319 aa)). The active-site Proton acceptor is the His58.

It belongs to the alpha-carbonic anhydrase family. Component of the organic matrix of calcified shell layers like nacre and prisms.

Its subcellular location is the secreted. The protein is Nacrein-like protein of Mytilus californianus (California mussel).